The primary structure comprises 617 residues: Elongation factor 4 (617 aa).

A tr-type G domain is found at 17-198 (AIIRNFCIIA…KIVRDLPAPV (182 aa)). GTP contacts are provided by residues 29–34 (DHGKST) and 145–148 (NKID).

Belongs to the TRAFAC class translation factor GTPase superfamily. Classic translation factor GTPase family. LepA subfamily.

Its subcellular location is the cell membrane. It carries out the reaction GTP + H2O = GDP + phosphate + H(+). Its function is as follows. Required for accurate and efficient protein synthesis under certain stress conditions. May act as a fidelity factor of the translation reaction, by catalyzing a one-codon backward translocation of tRNAs on improperly translocated ribosomes. Back-translocation proceeds from a post-translocation (POST) complex to a pre-translocation (PRE) complex, thus giving elongation factor G a second chance to translocate the tRNAs correctly. Binds to ribosomes in a GTP-dependent manner. This chain is Elongation factor 4, found in Paenarthrobacter aurescens (strain TC1).